The chain runs to 504 residues: ATP synthase subunit alpha (504 aa).

An ATP-binding site is contributed by 169-176 (GDRQTGKT).

Belongs to the ATPase alpha/beta chains family. As to quaternary structure, F-type ATPases have 2 components, CF(1) - the catalytic core - and CF(0) - the membrane proton channel. CF(1) has five subunits: alpha(3), beta(3), gamma(1), delta(1), epsilon(1). CF(0) has three main subunits: a(1), b(2) and c(9-12). The alpha and beta chains form an alternating ring which encloses part of the gamma chain. CF(1) is attached to CF(0) by a central stalk formed by the gamma and epsilon chains, while a peripheral stalk is formed by the delta and b chains.

The protein localises to the cell membrane. It carries out the reaction ATP + H2O + 4 H(+)(in) = ADP + phosphate + 5 H(+)(out). Functionally, produces ATP from ADP in the presence of a proton gradient across the membrane. The alpha chain is a regulatory subunit. The chain is ATP synthase subunit alpha from Clostridium botulinum (strain Alaska E43 / Type E3).